Here is a 198-residue protein sequence, read N- to C-terminus: Single-stranded DNA cytosine deaminase (198 aa).

The short motif at 1 to 30 (MDSLLMKQRKFLYHFKNVRWAKGRHETYLC) is the Bipartite nuclear localization signal element. The segment at 2–26 (DSLLMKQRKFLYHFKNVRWAKGRHE) is interaction with SUPT6H. The 107-residue stretch at 23–129 (GRHETYLCYV…KAEPEGLRRL (107 aa)) folds into the CMP/dCMP-type deaminase domain. Threonine 27 carries the post-translational modification Phosphothreonine; by PKA. Serine 38 is subject to Phosphoserine; by PKA. Residues 39-42 (ATSF) form an important for interaction with CTNNBL1 region. Histidine 56 serves as a coordination point for Zn(2+). The active-site Proton donor is the glutamate 58. Zn(2+)-binding residues include cysteine 87 and cysteine 90. The tract at residues 88-116 (YDCARHVADFLRGYPNLSLRIFAARLYFC) is required for interaction with RNF126. Positions 183–198 (LYEVDDLRDAFRTLGL) match the Nuclear export signal motif.

It belongs to the cytidine and deoxycytidylate deaminase family. As to quaternary structure, interacts with CTNNBL1; the interaction is important for the immunoglobulin switch activity of AICDA. Interacts (via its NLS) with KPNA1. Interacts with PKA/PRKACA and PRKAR1A/PKR1. Interacts with SUPT6H, TRIM28 and NCL. Directly interacts with MCM3AP; this interaction may favor AICDA recruitment to immunoglobulin variable region genes, hence promoting somatic hypermutations. It depends on Zn(2+) as a cofactor. In terms of processing, ser-38 is the major site whereas Thr-27 is the minor site of phosphorylation. Phosphorylation regulates its class-switch recombination activity. Post-translationally, probably monoubiquitinated on several residues by RNF126. As to expression, expressed in thymus, lung, spleen, kidney, small intestine, lymph node and tonsil.

It is found in the nucleus. The protein localises to the cytoplasm. It catalyses the reaction a 2'-deoxycytidine in single-stranded DNA + H2O + H(+) = a 2'-deoxyuridine in single-stranded DNA + NH4(+). Functionally, single-stranded DNA-specific cytidine deaminase. Involved in somatic hypermutation (SHM), gene conversion, and class-switch recombination (CSR) in B-lymphocytes by deaminating C to U during transcription of Ig-variable (V) and Ig-switch (S) region DNA. Required for several crucial steps of B-cell terminal differentiation necessary for efficient antibody responses. May also play a role in the epigenetic regulation of gene expression by participating in DNA demethylation. This Canis lupus familiaris (Dog) protein is Single-stranded DNA cytosine deaminase (AICDA).